The chain runs to 1615 residues: Regulating synaptic membrane exocytosis protein 1 (1615 aa).

The interval 1–26 is disordered; that stretch reads MSSAVGPRGPRPPTVPPPMQELPDLS. Pro residues predominate over residues 9–20; the sequence is GPRPPTVPPPMQ. Positions 22–205 constitute a RabBD domain; sequence LPDLSHLTEE…TKSGAWFFGS (184 aa). The segment at 133–193 adopts an FYVE-type zinc-finger fold; sequence KDDAPTCGIC…VCNLCRKQQE (61 aa). Cys-139, Cys-142, Cys-155, Cys-158, Cys-163, Cys-166, Cys-185, and Cys-188 together coordinate Zn(2+). The segment at 205–569 is disordered; that stretch reads SGPQQPSQDG…CEDVELESES (365 aa). Polar residues predominate over residues 206–222; the sequence is GPQQPSQDGTLSDTATG. The span at 227 to 240 shows a compositional bias: basic and acidic residues; sequence VPREKKARLQERSR. Polar residues predominate over residues 241–256; the sequence is SQTPLSTAAVSSQDTA. A compositionally biased stretch (basic and acidic residues) spans 327-379; the sequence is ADERERKERRETRRLEKGRSQDYSDRPEKRDNGRVAEDQKQRKEEEYQTRYRS. Residues 399–410 are compositionally biased toward basic residues; that stretch reads MHARVSRARHER. Over residues 421 to 459 the composition is skewed to low complexity; the sequence is EAAAAAPAEATAGKRAPATARVSPPESPRARAAAAQPPT. Positions 460–475 are enriched in pro residues; that stretch reads EHGPPPPRPAPGPAEP. Over residues 476 to 489 the composition is skewed to basic and acidic residues; that stretch reads PEPRVPEPLRKQGR. The span at 511–523 shows a compositional bias: polar residues; the sequence is RNDSLSSDQSESV. Position 514 is a phosphoserine (Ser-514). Residues 529–541 are compositionally biased toward basic residues; it reads KPHRPKRGGKRRQ. The span at 559–569 shows a compositional bias: acidic residues; the sequence is SCEDVELESES. A Phosphoserine modification is found at Ser-592. One can recognise a PDZ domain in the interval 619–705; sequence RTTMPKESGA…EPQVEIIVSR (87 aa). The interval 712-746 is disordered; it reads RIPESSHPPLESSSSSFESQKMERPSISVISPTSP. Over residues 714–730 the composition is skewed to low complexity; it reads PESSHPPLESSSSSFES. Residues Ser-742 and Ser-745 each carry the phosphoserine modification. Positions 756–879 constitute a C2 1 domain; that stretch reads LPGQLSVKLW…ALLDDEPHWY (124 aa). A disordered region spans residues 884–1201; the sequence is HDESSLPLPQ…RQLPQVPVRS (318 aa). Position 895 is a phosphoserine (Ser-895). Residues 949–958 show a composition bias toward polar residues; that stretch reads ATTLTVPEQQ. Residue Ser-991 is modified to Phosphoserine. Residues 1006-1023 show a composition bias toward basic and acidic residues; the sequence is RHHDASRSPADHRSRHVE. Position 1045 is a phosphoserine (Ser-1045). Positions 1078–1092 are enriched in basic and acidic residues; that stretch reads SPERERHSRKSERCS. The segment covering 1173-1187 has biased composition (polar residues); sequence QGSPTQSPPADTSFG. Ser-1175 is subject to Phosphoserine. Thr-1177 bears the Phosphothreonine mark. Phosphoserine is present on residues Ser-1179, Ser-1231, Ser-1233, Ser-1234, Ser-1262, Ser-1263, and Ser-1265. The tract at residues 1256–1313 is disordered; sequence DNASAKSSDSDVSDVSAISRASSTSRLSSTSFMSEQSERPRGRISSFTPKMQGRRMGT. Positions 1268–1289 are enriched in low complexity; sequence SDVSAISRASSTSRLSSTSFMS. Ser-1339 is subject to Phosphoserine. The disordered stretch occupies residues 1368–1397; it reads RSRSTSQLSQTESGHKKLKSTIQRSTETGM. One can recognise a C2 2 domain in the interval 1461–1579; the sequence is AMGDIQIGME…DLSSMVIGWY (119 aa). 4 positions are modified to phosphoserine: Ser-1600, Ser-1603, Ser-1606, and Ser-1615.

As to quaternary structure, interacts with RAB3C, RAB10, RAB26 and RAB37. Binds SNAP25, SYT1 and CACNA1B. Interaction with SYT1 is enhanced by calcium ions. Interaction with SNAP25 is weaker in the presence of calcium ions. Binds RAB3A, RAB3B and RAB3D that have been activated by GTP-binding. Binds UNC13A. Interacts with TSPOAP1 and RIMBP2. Interacts with PPFIA3 and PPFIA4. Interacts with ERC1. Phosphorylated by BRSK1. In terms of tissue distribution, highly expressed in hippocampus, brain cortex, cerebellum and olfactory bulb. Detected at lower levels in midbrain, hindbrain and spinal cord. Detected retina and in spinal cord motor neurons.

The protein resides in the cell membrane. Its subcellular location is the synapse. It localises to the presynaptic cell membrane. Its function is as follows. Rab effector involved in exocytosis. May act as scaffold protein that regulates neurotransmitter release at the active zone. Essential for maintaining normal probability of neurotransmitter release and for regulating release during short-term synaptic plasticity. Plays a role in dendrite formation by melanocytes. The sequence is that of Regulating synaptic membrane exocytosis protein 1 (Rims1) from Rattus norvegicus (Rat).